The chain runs to 160 residues: Cytochrome b6-f complex subunit 4 (160 aa).

3 helical membrane-spanning segments follow: residues 36–56, 95–115, and 131–151; these read LLYI…GLAV, LLGV…PFLE, and TVFL…TLPI.

The protein belongs to the cytochrome b family. PetD subfamily. In terms of assembly, the 4 large subunits of the cytochrome b6-f complex are cytochrome b6, subunit IV (17 kDa polypeptide, petD), cytochrome f and the Rieske protein, while the 4 small subunits are petG, petL, petM and petN. The complex functions as a dimer.

It is found in the plastid. It localises to the chloroplast thylakoid membrane. Its function is as follows. Component of the cytochrome b6-f complex, which mediates electron transfer between photosystem II (PSII) and photosystem I (PSI), cyclic electron flow around PSI, and state transitions. The protein is Cytochrome b6-f complex subunit 4 of Lotus japonicus (Lotus corniculatus var. japonicus).